The following is a 765-amino-acid chain: 1,4-alpha-glucan branching enzyme GlgB (765 aa).

Aspartate 431 functions as the Nucleophile in the catalytic mechanism. Glutamate 484 functions as the Proton donor in the catalytic mechanism.

Belongs to the glycosyl hydrolase 13 family. GlgB subfamily. Monomer.

The enzyme catalyses Transfers a segment of a (1-&gt;4)-alpha-D-glucan chain to a primary hydroxy group in a similar glucan chain.. It functions in the pathway glycan biosynthesis; glycogen biosynthesis. Functionally, catalyzes the formation of the alpha-1,6-glucosidic linkages in glycogen by scission of a 1,4-alpha-linked oligosaccharide from growing alpha-1,4-glucan chains and the subsequent attachment of the oligosaccharide to the alpha-1,6 position. This is 1,4-alpha-glucan branching enzyme GlgB from Synechococcus sp. (strain CC9311).